Consider the following 863-residue polypeptide: Protein ARG5,6, mitochondrial (863 aa).

The N-terminal 65 residues, 1 to 65 (MPSASLLVST…RYVSSTNGFS (65 aa)), are a transit peptide targeting the mitochondrion. Positions 353 to 505 (KLVKRSSIGE…NFVKSCDTAS (153 aa)) constitute an N-acetyltransferase domain. Serine 359 is modified (phosphoserine). Cysteine 675 is an active-site residue.

This sequence in the N-terminal section; belongs to the acetylglutamate kinase family. The protein in the C-terminal section; belongs to the NAGSA dehydrogenase family. In terms of processing, the protein precursor is cleaved into the two biologically active enzymes, the kinase and the reductase.

The protein localises to the mitochondrion. It carries out the reaction N-acetyl-L-glutamate 5-semialdehyde + phosphate + NADP(+) = N-acetyl-L-glutamyl 5-phosphate + NADPH + H(+). The catalysed reaction is N-acetyl-L-glutamate + ATP = N-acetyl-L-glutamyl 5-phosphate + ADP. It functions in the pathway amino-acid biosynthesis; L-arginine biosynthesis; N(2)-acetyl-L-ornithine from L-glutamate: step 2/4. It participates in amino-acid biosynthesis; L-arginine biosynthesis; N(2)-acetyl-L-ornithine from L-glutamate: step 3/4. The kinase activity is inhibited by arginine. This chain is Protein ARG5,6, mitochondrial (ARG5,6), found in Saccharomyces cerevisiae (strain ATCC 204508 / S288c) (Baker's yeast).